The chain runs to 189 residues: MLLSDRDLRAEISAGRLGIDPFDDSMVQPSSVDVRLDSLFRVFNNTRYTHIDPAQRQDELTTLVEPAEGEPFVLHPGEFVLGSTLEVCSLPDDLAGRLEGKSSLGRLGLLTHSTAGFIDPGFNGHITLELSNVANLPITLWPGMKIGQLCLLRLSSAAEHPYGSSAVGSKYQGQRGPTPSKAYLNFAQS.

DCTP-binding positions include 101-106, aspartate 119, 127-129, glutamine 148, tyrosine 162, and glutamine 174; these read KSSLGR and TLE. The Proton donor/acceptor role is filled by glutamate 129.

It belongs to the dCTP deaminase family. In terms of assembly, homotrimer.

The catalysed reaction is dCTP + 2 H2O = dUMP + NH4(+) + diphosphate. It participates in pyrimidine metabolism; dUMP biosynthesis; dUMP from dCTP: step 1/1. In terms of biological role, bifunctional enzyme that catalyzes both the deamination of dCTP to dUTP and the hydrolysis of dUTP to dUMP without releasing the toxic dUTP intermediate. This is dCTP deaminase, dUMP-forming from Rhodococcus jostii (strain RHA1).